A 316-amino-acid chain; its full sequence is Cyclin-dependent kinase inhibitor 1C (316 aa).

Omega-N-methylarginine is present on arginine 107. A disordered region spans residues 124–153 (ESLDGLEEAPEQLPSVPVPAPASTPPPVPV). The span at 139-153 (VPVPAPASTPPPVPV) shows a compositional bias: pro residues. 9 tandem repeats follow at residues 156 to 159 (PAPA), 160 to 163 (PAPA), 180 to 183 (PAPA), 184 to 187 (PAPA), 188 to 191 (PAPA), 198 to 201 (PAPA), 202 to 205 (PAPA), 206 to 209 (PAPA), and 210 to 213 (PAPA). Residues 156-213 (PAPAPAPAPVAAPVAAPVAVAVLAPAPAPAPAPAPAPAPVAAPAPAPAPAPAPAPAPA) are 9 X 4 AA repeats of P-A-P-A. Pro residues predominate over residues 181–217 (APAPAPAPAPAPAPVAAPAPAPAPAPAPAPAPAPAPD). The tract at residues 181 to 260 (APAPAPAPAP…AAGTAAASAN (80 aa)) is disordered. Over residues 223 to 233 (SAEQGANQGQR) the composition is skewed to polar residues. Over residues 251 to 260 (AAGTAAASAN) the composition is skewed to low complexity. Phosphoserine is present on serine 268. The short motif at 278 to 281 (KRKR) is the Nuclear localization signal element. The segment at 278–316 (KRKRSAPEKSSGDVPAPCPSPSAAPGVGSVEQTPRKRLR) is disordered.

The protein belongs to the CDI family. As to quaternary structure, interacts with PCNA. In terms of tissue distribution, expressed in the heart, brain, lung, skeletal muscle, kidney, pancreas and testis. Expressed in the eye. High levels are seen in the placenta while low levels are seen in the liver.

The protein localises to the nucleus. Its function is as follows. Potent tight-binding inhibitor of several G1 cyclin/CDK complexes (cyclin E-CDK2, cyclin D2-CDK4, and cyclin A-CDK2) and, to lesser extent, of the mitotic cyclin B-CDC2. Negative regulator of cell proliferation. May play a role in maintenance of the non-proliferative state throughout life. The protein is Cyclin-dependent kinase inhibitor 1C (CDKN1C) of Homo sapiens (Human).